The sequence spans 399 residues: 4-hydroxy-3-methylbut-2-enyl diphosphate reductase (399 aa).

A [4Fe-4S] cluster-binding site is contributed by cysteine 66. Histidine 96 lines the (2E)-4-hydroxy-3-methylbut-2-enyl diphosphate pocket. Histidine 96 lines the dimethylallyl diphosphate pocket. Residue histidine 96 participates in isopentenyl diphosphate binding. Position 157 (cysteine 157) interacts with [4Fe-4S] cluster. Position 185 (histidine 185) interacts with (2E)-4-hydroxy-3-methylbut-2-enyl diphosphate. Histidine 185 provides a ligand contact to dimethylallyl diphosphate. Position 185 (histidine 185) interacts with isopentenyl diphosphate. Glutamate 187 acts as the Proton donor in catalysis. (2E)-4-hydroxy-3-methylbut-2-enyl diphosphate is bound at residue threonine 250. Cysteine 288 contacts [4Fe-4S] cluster. (2E)-4-hydroxy-3-methylbut-2-enyl diphosphate-binding residues include serine 317, serine 318, asparagine 319, and serine 380. The dimethylallyl diphosphate site is built by serine 317, serine 318, asparagine 319, and serine 380. Residues serine 317, serine 318, asparagine 319, and serine 380 each contribute to the isopentenyl diphosphate site.

The protein belongs to the IspH family. It depends on [4Fe-4S] cluster as a cofactor.

It carries out the reaction isopentenyl diphosphate + 2 oxidized [2Fe-2S]-[ferredoxin] + H2O = (2E)-4-hydroxy-3-methylbut-2-enyl diphosphate + 2 reduced [2Fe-2S]-[ferredoxin] + 2 H(+). It catalyses the reaction dimethylallyl diphosphate + 2 oxidized [2Fe-2S]-[ferredoxin] + H2O = (2E)-4-hydroxy-3-methylbut-2-enyl diphosphate + 2 reduced [2Fe-2S]-[ferredoxin] + 2 H(+). It functions in the pathway isoprenoid biosynthesis; dimethylallyl diphosphate biosynthesis; dimethylallyl diphosphate from (2E)-4-hydroxy-3-methylbutenyl diphosphate: step 1/1. The protein operates within isoprenoid biosynthesis; isopentenyl diphosphate biosynthesis via DXP pathway; isopentenyl diphosphate from 1-deoxy-D-xylulose 5-phosphate: step 6/6. Its function is as follows. Catalyzes the conversion of 1-hydroxy-2-methyl-2-(E)-butenyl 4-diphosphate (HMBPP) into a mixture of isopentenyl diphosphate (IPP) and dimethylallyl diphosphate (DMAPP). Acts in the terminal step of the DOXP/MEP pathway for isoprenoid precursor biosynthesis. The protein is 4-hydroxy-3-methylbut-2-enyl diphosphate reductase of Parasynechococcus marenigrum (strain WH8102).